The following is a 187-amino-acid chain: TATA-box-binding protein (187 aa).

Tandem repeats lie at residues 10–86 (IENV…FDKL) and 101–179 (VQNI…VSRL).

This sequence belongs to the TBP family.

In terms of biological role, general factor that plays a role in the activation of archaeal genes transcribed by RNA polymerase. Binds specifically to the TATA box promoter element which lies close to the position of transcription initiation. This Natronomonas pharaonis (strain ATCC 35678 / DSM 2160 / CIP 103997 / JCM 8858 / NBRC 14720 / NCIMB 2260 / Gabara) (Halobacterium pharaonis) protein is TATA-box-binding protein.